We begin with the raw amino-acid sequence, 333 residues long: Glyceraldehyde-3-phosphate dehydrogenase (333 aa).

Residues 11-12 (RI), aspartate 33, arginine 78, and serine 120 each bind NAD(+). D-glyceraldehyde 3-phosphate is bound by residues 149–151 (SCT), threonine 180, 209–210 (TG), and arginine 232. The Nucleophile role is filled by cysteine 150. Cysteine 150 carries the post-translational modification S-nitrosocysteine. Asparagine 314 contributes to the NAD(+) binding site.

The protein belongs to the glyceraldehyde-3-phosphate dehydrogenase family. Homotetramer. Post-translationally, S-nitrosylation of Cys-150 leads to translocation to the nucleus.

Its subcellular location is the cytoplasm. It localises to the cytosol. The protein resides in the cytoskeleton. It is found in the nucleus. The enzyme catalyses D-glyceraldehyde 3-phosphate + phosphate + NAD(+) = (2R)-3-phospho-glyceroyl phosphate + NADH + H(+). It carries out the reaction S-nitroso-L-cysteinyl-[GAPDH] + L-cysteinyl-[protein] = L-cysteinyl-[GAPDH] + S-nitroso-L-cysteinyl-[protein]. It functions in the pathway carbohydrate degradation; glycolysis; pyruvate from D-glyceraldehyde 3-phosphate: step 1/5. Has both glyceraldehyde-3-phosphate dehydrogenase and nitrosylase activities, thereby playing a role in glycolysis and nuclear functions, respectively. Glyceraldehyde-3-phosphate dehydrogenase is a key enzyme in glycolysis that catalyzes the first step of the pathway by converting D-glyceraldehyde 3-phosphate (G3P) into 3-phospho-D-glyceroyl phosphate. Participates in nuclear events including transcription, RNA transport, DNA replication and apoptosis. Nuclear functions are probably due to the nitrosylase activity that mediates cysteine S-nitrosylation of nuclear target proteins such as SIRT1, HDAC2 and PRKDC. This Danio rerio (Zebrafish) protein is Glyceraldehyde-3-phosphate dehydrogenase.